We begin with the raw amino-acid sequence, 232 residues long: Imidazoleglycerol-phosphate dehydratase (232 aa).

The protein belongs to the imidazoleglycerol-phosphate dehydratase family.

It catalyses the reaction D-erythro-1-(imidazol-4-yl)glycerol 3-phosphate = 3-(imidazol-4-yl)-2-oxopropyl phosphate + H2O. It participates in amino-acid biosynthesis; L-histidine biosynthesis; L-histidine from 5-phospho-alpha-D-ribose 1-diphosphate: step 6/9. The chain is Imidazoleglycerol-phosphate dehydratase (HIS3) from Lachancea kluyveri (strain ATCC 58438 / CBS 3082 / BCRC 21498 / NBRC 1685 / JCM 7257 / NCYC 543 / NRRL Y-12651) (Yeast).